Reading from the N-terminus, the 433-residue chain is Glutamyl-tRNA reductase (433 aa).

Substrate is bound by residues 49–52 (TCNR), Ser-114, 119–121 (EPQ), and Gln-125. The active-site Nucleophile is the Cys-50. Residue 201 to 206 (GAGETI) coordinates NADP(+).

The protein belongs to the glutamyl-tRNA reductase family. As to quaternary structure, homodimer.

It catalyses the reaction (S)-4-amino-5-oxopentanoate + tRNA(Glu) + NADP(+) = L-glutamyl-tRNA(Glu) + NADPH + H(+). It participates in porphyrin-containing compound metabolism; protoporphyrin-IX biosynthesis; 5-aminolevulinate from L-glutamyl-tRNA(Glu): step 1/2. In terms of biological role, catalyzes the NADPH-dependent reduction of glutamyl-tRNA(Glu) to glutamate 1-semialdehyde (GSA). This chain is Glutamyl-tRNA reductase, found in Histophilus somni (strain 2336) (Haemophilus somnus).